Here is a 367-residue protein sequence, read N- to C-terminus: UDP-N-acetylglucosamine--N-acetylmuramyl-(pentapeptide) pyrophosphoryl-undecaprenol N-acetylglucosamine transferase (367 aa).

UDP-N-acetyl-alpha-D-glucosamine is bound by residues 15–17, Asn-126, Arg-169, Ser-197, and Gln-298; that span reads TGG.

The protein belongs to the glycosyltransferase 28 family. MurG subfamily.

The protein localises to the cell inner membrane. The enzyme catalyses di-trans,octa-cis-undecaprenyl diphospho-N-acetyl-alpha-D-muramoyl-L-alanyl-D-glutamyl-meso-2,6-diaminopimeloyl-D-alanyl-D-alanine + UDP-N-acetyl-alpha-D-glucosamine = di-trans,octa-cis-undecaprenyl diphospho-[N-acetyl-alpha-D-glucosaminyl-(1-&gt;4)]-N-acetyl-alpha-D-muramoyl-L-alanyl-D-glutamyl-meso-2,6-diaminopimeloyl-D-alanyl-D-alanine + UDP + H(+). It functions in the pathway cell wall biogenesis; peptidoglycan biosynthesis. Cell wall formation. Catalyzes the transfer of a GlcNAc subunit on undecaprenyl-pyrophosphoryl-MurNAc-pentapeptide (lipid intermediate I) to form undecaprenyl-pyrophosphoryl-MurNAc-(pentapeptide)GlcNAc (lipid intermediate II). This chain is UDP-N-acetylglucosamine--N-acetylmuramyl-(pentapeptide) pyrophosphoryl-undecaprenol N-acetylglucosamine transferase, found in Bradyrhizobium sp. (strain ORS 278).